A 131-amino-acid polypeptide reads, in one-letter code: Small ribosomal subunit protein uS8 (131 aa).

It belongs to the universal ribosomal protein uS8 family. As to quaternary structure, part of the 30S ribosomal subunit. Contacts proteins S5 and S12.

In terms of biological role, one of the primary rRNA binding proteins, it binds directly to 16S rRNA central domain where it helps coordinate assembly of the platform of the 30S subunit. This Burkholderia lata (strain ATCC 17760 / DSM 23089 / LMG 22485 / NCIMB 9086 / R18194 / 383) protein is Small ribosomal subunit protein uS8.